The chain runs to 142 residues: ATP synthase epsilon chain (142 aa).

Belongs to the ATPase epsilon chain family. As to quaternary structure, F-type ATPases have 2 components, CF(1) - the catalytic core - and CF(0) - the membrane proton channel. CF(1) has five subunits: alpha(3), beta(3), gamma(1), delta(1), epsilon(1). CF(0) has three main subunits: a, b and c.

The protein localises to the cell inner membrane. Functionally, produces ATP from ADP in the presence of a proton gradient across the membrane. The polypeptide is ATP synthase epsilon chain (Pasteurella multocida (strain Pm70)).